We begin with the raw amino-acid sequence, 150 residues long: Myosin, essential light chain (150 aa).

EF-hand domains follow at residues 3–38 (ASAD…LGKS) and 75–110 (EQQK…LGDY). Residues Asp-16, Asp-18, Asp-20, Lys-22, and Asp-27 each contribute to the Ca(2+) site.

As to quaternary structure, myosin is a hexamer of 2 heavy chains and 4 light chains (two regulatory light chains and two essential light chains).

This Dictyostelium discoideum (Social amoeba) protein is Myosin, essential light chain (mlcE).